Reading from the N-terminus, the 294-residue chain is 4-hydroxy-tetrahydrodipicolinate synthase (294 aa).

Position 47 (Thr-47) interacts with pyruvate. Residue Tyr-135 is the Proton donor/acceptor of the active site. The Schiff-base intermediate with substrate role is filled by Lys-163. Thr-205 provides a ligand contact to pyruvate.

It belongs to the DapA family. As to quaternary structure, homotetramer; dimer of dimers.

Its subcellular location is the cytoplasm. The enzyme catalyses L-aspartate 4-semialdehyde + pyruvate = (2S,4S)-4-hydroxy-2,3,4,5-tetrahydrodipicolinate + H2O + H(+). Its pathway is amino-acid biosynthesis; L-lysine biosynthesis via DAP pathway; (S)-tetrahydrodipicolinate from L-aspartate: step 3/4. Catalyzes the condensation of (S)-aspartate-beta-semialdehyde [(S)-ASA] and pyruvate to 4-hydroxy-tetrahydrodipicolinate (HTPA). This is 4-hydroxy-tetrahydrodipicolinate synthase from Rickettsia montanensis.